A 400-amino-acid polypeptide reads, in one-letter code: ATP-dependent RNA helicase fal-1 (400 aa).

Positions 26–54 match the Q motif motif; it reads PTFESMSLKESLLRGIYAYGYESPSAVQS. Residues 57-227 enclose the Helicase ATP-binding domain; sequence IVQICKGRDT…TKFMTDPVRI (171 aa). Residue 70–77 coordinates ATP; sequence AQSGTGKT. The DEAD box signature appears at 175-178; sequence DEAD. The Helicase C-terminal domain maps to 238–399; sequence GLKQYFIAVE…EMPMNVADLI (162 aa).

The protein belongs to the DEAD box helicase family. DDX48/FAL1 subfamily.

The protein resides in the nucleus. The protein localises to the nucleolus. The catalysed reaction is ATP + H2O = ADP + phosphate + H(+). Its function is as follows. ATP-dependent RNA helicase involved in 40S ribosomal subunit biogenesis. Required for the processing and cleavage of 35S pre-rRNA at sites A0, A1, and A2, leading to mature 18S rRNA. This is ATP-dependent RNA helicase fal-1 (fal-1) from Neurospora crassa (strain ATCC 24698 / 74-OR23-1A / CBS 708.71 / DSM 1257 / FGSC 987).